Reading from the N-terminus, the 385-residue chain is DNA replication and repair protein RecF (385 aa).

ATP is bound at residue 30-37; the sequence is GPNGYGKT.

This sequence belongs to the RecF family.

Its subcellular location is the cytoplasm. Functionally, the RecF protein is involved in DNA metabolism; it is required for DNA replication and normal SOS inducibility. RecF binds preferentially to single-stranded, linear DNA. It also seems to bind ATP. The polypeptide is DNA replication and repair protein RecF (Mycobacterium tuberculosis (strain ATCC 25177 / H37Ra)).